The primary structure comprises 436 residues: Methylenetetrahydrofolate--tRNA-(uracil-5-)-methyltransferase TrmFO (436 aa).

11-16 (GAGLAG) is an FAD binding site.

The protein belongs to the MnmG family. TrmFO subfamily. FAD serves as cofactor.

The protein localises to the cytoplasm. The enzyme catalyses uridine(54) in tRNA + (6R)-5,10-methylene-5,6,7,8-tetrahydrofolate + NADH + H(+) = 5-methyluridine(54) in tRNA + (6S)-5,6,7,8-tetrahydrofolate + NAD(+). It carries out the reaction uridine(54) in tRNA + (6R)-5,10-methylene-5,6,7,8-tetrahydrofolate + NADPH + H(+) = 5-methyluridine(54) in tRNA + (6S)-5,6,7,8-tetrahydrofolate + NADP(+). Functionally, catalyzes the folate-dependent formation of 5-methyl-uridine at position 54 (M-5-U54) in all tRNAs. The chain is Methylenetetrahydrofolate--tRNA-(uracil-5-)-methyltransferase TrmFO from Shouchella clausii (strain KSM-K16) (Alkalihalobacillus clausii).